The following is a 450-amino-acid chain: Cyclic GMP-AMP phosphodiesterase SMPDL3A (450 aa).

The first 22 residues, 1 to 22 (MARLGALVCCLLAAWHCRPGLG), serve as a signal peptide directing secretion. D42 and H44 together coordinate Zn(2+). A disulfide bridge connects residues C59 and C78. D107 contacts Zn(2+). H111 lines the ATP pocket. N124 and N128 each carry an N-linked (GlcNAc...) asparagine glycan. A Zn(2+)-binding site is contributed by N148. The ATP site is built by N148 and H149. N-linked (GlcNAc...) asparagine glycosylation is found at N219 and N235. H249, H290, and H292 together coordinate Zn(2+). N-linked (GlcNAc...) asparagine glycans are attached at residues N353 and N370. 2 disulfides stabilise this stretch: C417/C421 and C427/C440.

The protein belongs to the acid sphingomyelinase family. Monomer. Homodimer; homodimerizes following 2',3'-cGAMP-binding. The cofactor is Zn(2+).

Its subcellular location is the secreted. It catalyses the reaction 2',3'-cGAMP + H2O = 5'-pGpA(2'-5') + H(+). The enzyme catalyses 5'-pGpA(2'-5') + H2O = 5'-GpA(2'-5') + phosphate. It carries out the reaction a ribonucleoside 5'-triphosphate + H2O = a ribonucleoside 5'-diphosphate + phosphate + H(+). The catalysed reaction is ATP + H2O = ADP + phosphate + H(+). In terms of biological role, cyclic-nucleotide phosphodiesterase that acts as a negative regulator of innate immunity by mediating degradation of 2',3'-cGAMP, thereby inhibiting the cGAS-STING signaling. Specifically linearizes 2',3'-cGAMP into 2'5'-bond pGpA and further hydrolyzes pGpA to produce GpA. Also has in vitro nucleotide phosphodiesterase activity with nucleoside triphosphates, such as ATP. Has in vitro activity with p-nitrophenyl-TMP. Has lower activity with nucleoside diphosphates, and no activity with nucleoside monophosphates. Has in vitro activity with CDP-choline, giving rise to CMP and phosphocholine. Has in vitro activity with CDP-ethanolamine. Does not have sphingomyelin phosphodiesterase activity. The sequence is that of Cyclic GMP-AMP phosphodiesterase SMPDL3A (SMPDL3A) from Bos taurus (Bovine).